Here is a 102-residue protein sequence, read N- to C-terminus: Putative ribosomal protein uL13-like (102 aa).

The protein belongs to the universal ribosomal protein uL13 family.

The sequence is that of Putative ribosomal protein uL13-like (RPL13AP3) from Homo sapiens (Human).